The sequence spans 309 residues: Pseudouridine-5'-phosphate glycosidase 2 (309 aa).

Catalysis depends on glutamate 26, which acts as the Proton donor. Residues lysine 87 and valine 107 each coordinate substrate. Aspartate 139 is a Mn(2+) binding site. Serine 141–aspartate 143 contributes to the substrate binding site. Residue lysine 160 is the Nucleophile of the active site.

The protein belongs to the pseudouridine-5'-phosphate glycosidase family. As to quaternary structure, homotrimer. Mn(2+) serves as cofactor.

It catalyses the reaction D-ribose 5-phosphate + uracil = psi-UMP + H2O. In terms of biological role, catalyzes the reversible cleavage of pseudouridine 5'-phosphate (PsiMP) to ribose 5-phosphate and uracil. Functions biologically in the cleavage direction, as part of a pseudouridine degradation pathway. This is Pseudouridine-5'-phosphate glycosidase 2 from Rhizobium johnstonii (strain DSM 114642 / LMG 32736 / 3841) (Rhizobium leguminosarum bv. viciae).